The following is a 298-amino-acid chain: Acetylglutamate kinase (298 aa).

Residues 73 to 74 (GG), R95, and N188 each bind substrate.

The protein belongs to the acetylglutamate kinase family. ArgB subfamily.

The protein resides in the cytoplasm. It catalyses the reaction N-acetyl-L-glutamate + ATP = N-acetyl-L-glutamyl 5-phosphate + ADP. The protein operates within amino-acid biosynthesis; L-arginine biosynthesis; N(2)-acetyl-L-ornithine from L-glutamate: step 2/4. Functionally, catalyzes the ATP-dependent phosphorylation of N-acetyl-L-glutamate. This is Acetylglutamate kinase from Nostoc punctiforme (strain ATCC 29133 / PCC 73102).